Reading from the N-terminus, the 355-residue chain is Peptide chain release factor 1 (355 aa).

The residue at position 231 (Gln231) is an N5-methylglutamine. Basic and acidic residues predominate over residues 280 to 291 (SERLAKESEARK). The interval 280 to 303 (SERLAKESEARKSQVGSGDRSERI) is disordered.

Belongs to the prokaryotic/mitochondrial release factor family. Post-translationally, methylated by PrmC. Methylation increases the termination efficiency of RF1.

It is found in the cytoplasm. In terms of biological role, peptide chain release factor 1 directs the termination of translation in response to the peptide chain termination codons UAG and UAA. This chain is Peptide chain release factor 1, found in Campylobacter jejuni (strain RM1221).